A 222-amino-acid chain; its full sequence is Large ribosomal subunit protein uL1 (222 aa).

The protein belongs to the universal ribosomal protein uL1 family. As to quaternary structure, part of the 50S ribosomal subunit.

Binds directly to 23S rRNA. Probably involved in E site tRNA release. In terms of biological role, protein L1 is also a translational repressor protein, it controls the translation of its operon by binding to its mRNA. The sequence is that of Large ribosomal subunit protein uL1 from Pyrobaculum islandicum (strain DSM 4184 / JCM 9189 / GEO3).